A 229-amino-acid polypeptide reads, in one-letter code: Adenosylcobinamide-GDP ribazoletransferase (229 aa).

A run of 6 helical transmembrane segments spans residues 31–51, 55–75, 111–131, 134–154, 176–196, and 208–228; these read AMLL…AVLA, AVEL…AASS, AGVL…ATLL, PLLA…VCCT, VAVL…LVLV, and GDVM…AWAA.

This sequence belongs to the CobS family. Mg(2+) serves as cofactor.

It is found in the cell membrane. It carries out the reaction alpha-ribazole + adenosylcob(III)inamide-GDP = adenosylcob(III)alamin + GMP + H(+). It catalyses the reaction alpha-ribazole 5'-phosphate + adenosylcob(III)inamide-GDP = adenosylcob(III)alamin 5'-phosphate + GMP + H(+). It participates in cofactor biosynthesis; adenosylcobalamin biosynthesis; adenosylcobalamin from cob(II)yrinate a,c-diamide: step 7/7. Its function is as follows. Joins adenosylcobinamide-GDP and alpha-ribazole to generate adenosylcobalamin (Ado-cobalamin). Also synthesizes adenosylcobalamin 5'-phosphate from adenosylcobinamide-GDP and alpha-ribazole 5'-phosphate. This Nocardioides sp. (strain ATCC BAA-499 / JS614) protein is Adenosylcobinamide-GDP ribazoletransferase.